Consider the following 172-residue polypeptide: Putative phosphoesterase BAMEG_3349 (172 aa).

The active-site Proton donor is histidine 34. 2 consecutive short sequence motifs (HXTX) follow at residues 34–37 (HITL) and 115–118 (HLTI). Residue histidine 115 is the Proton acceptor of the active site.

Belongs to the 2H phosphoesterase superfamily. YjcG family.

This chain is Putative phosphoesterase BAMEG_3349, found in Bacillus anthracis (strain CDC 684 / NRRL 3495).